Reading from the N-terminus, the 275-residue chain is 3-methyl-2-oxobutanoate hydroxymethyltransferase (275 aa).

Aspartate 49 and aspartate 88 together coordinate Mg(2+). 3-methyl-2-oxobutanoate-binding positions include 49 to 50, aspartate 88, and lysine 118; that span reads DS. Position 120 (glutamate 120) interacts with Mg(2+). The Proton acceptor role is filled by glutamate 187.

It belongs to the PanB family. As to quaternary structure, homodecamer; pentamer of dimers. The cofactor is Mg(2+).

It is found in the cytoplasm. The catalysed reaction is 3-methyl-2-oxobutanoate + (6R)-5,10-methylene-5,6,7,8-tetrahydrofolate + H2O = 2-dehydropantoate + (6S)-5,6,7,8-tetrahydrofolate. It participates in cofactor biosynthesis; (R)-pantothenate biosynthesis; (R)-pantoate from 3-methyl-2-oxobutanoate: step 1/2. Its function is as follows. Catalyzes the reversible reaction in which hydroxymethyl group from 5,10-methylenetetrahydrofolate is transferred onto alpha-ketoisovalerate to form ketopantoate. This chain is 3-methyl-2-oxobutanoate hydroxymethyltransferase, found in Rhodospirillum centenum (strain ATCC 51521 / SW).